The sequence spans 131 residues: uncharacterized protein (131 aa).

The next 2 helical transmembrane spans lie at 68 to 88 (VVRA…VAPI) and 94 to 114 (VLGA…IVAI).

The protein resides in the cell membrane. This is an uncharacterized protein from Methanocaldococcus jannaschii (strain ATCC 43067 / DSM 2661 / JAL-1 / JCM 10045 / NBRC 100440) (Methanococcus jannaschii).